We begin with the raw amino-acid sequence, 70 residues long: Neuropeptide SIFamide (70 aa).

Residues 1-22 (MRFIVALCLFAIVMCIIHKAEG) form the signal peptide. A Phenylalanine amide modification is found at Phe34. A propeptide spanning residues 38–70 (GVVEYDTTGRALSALCEIASETCQAWYQTLENK) is cleaved from the precursor.

Expressed in antennal lobe (AL) and gnathal ganglion (GNG) with expression detected in most animals (at protein level). Not expressed in corpora cardiaca (CC) and corpora allata (CA) (at protein level).

The protein localises to the secreted. In terms of biological role, ligand for the neuropeptide SIFamide receptor. The sequence is that of Neuropeptide SIFamide from Agrotis ipsilon (Black cutworm moth).